The chain runs to 326 residues: Small ribosomal subunit biogenesis GTPase RsgA (326 aa).

The CP-type G domain maps to 80-241; the sequence is LSHQMHIIAS…IIDTPGIKGF (162 aa). GTP contacts are provided by residues 129 to 132 and 183 to 191; these read NKID and GHSGVGKST. Zn(2+) contacts are provided by C265, C270, H272, and C278.

Belongs to the TRAFAC class YlqF/YawG GTPase family. RsgA subfamily. Monomer. Associates with 30S ribosomal subunit, binds 16S rRNA. Zn(2+) serves as cofactor.

It localises to the cytoplasm. Functionally, one of several proteins that assist in the late maturation steps of the functional core of the 30S ribosomal subunit. Helps release RbfA from mature subunits. May play a role in the assembly of ribosomal proteins into the subunit. Circularly permuted GTPase that catalyzes slow GTP hydrolysis, GTPase activity is stimulated by the 30S ribosomal subunit. The chain is Small ribosomal subunit biogenesis GTPase RsgA from Flavobacterium psychrophilum (strain ATCC 49511 / DSM 21280 / CIP 103535 / JIP02/86).